A 578-amino-acid polypeptide reads, in one-letter code: MSSVEADEPDRATAPPSALLPEDGPGPDGTAAGPPPYARRWAALGVILGAEIMDLLDGTVMNVAAPAVRADLGGSLSVIQWITVGYTLAFAVLLVVGGRLGDIYGRKRMFVVGAVGFTAASVLCSVAAGPEMLTAARFLQGGLGALMIPQGLGLIKQMFPPKETAAAFGAFGPAIGLGAVLGPIVAGFLVDADLFGTGWRSVFLINLPIGVAVIVGAVLLLPEGKAPVRPKFDVVGMALVTSGLTLLIFPLVQGRERGWPAWAFVLMLAGAAVLVGFVAHELRQERRGGATLIELSLLRRSRYAAGLAVALVFFTGVSGMSLLLALHLQIGLGFSPTRAALTMTPWSVFLVVGAILTGAVLGSKFGRKALHGGLVVLALGVLIMLLTIGDQAGGLTSWELVPGIAVAGLGMGIMIGLLFDIALADVDKQEAGTASGVLTAVQQLGFTVGVAVLGTLFFGLLGSQATASVDDGASRARTELAAAGASTTEQDRLLADLRVCLRESASQQDSERTPDSCRNLQQARPAVAEATARAWRTAHTENFSTAMVRTLWVVIALLAVSFALAFRLPPKPREEEGF.

Residues 1-33 are disordered; it reads MSSVEADEPDRATAPPSALLPEDGPGPDGTAAG. The next 12 helical transmembrane spans lie at 78 to 98, 109 to 129, 135 to 155, 170 to 190, 202 to 222, 232 to 252, 259 to 279, 306 to 326, 341 to 361, 369 to 389, 444 to 464, and 546 to 566; these read VIQW…VVGG, MFVV…VAAG, AARF…LGLI, AFGP…GFLV, VFLI…LLLP, FDVV…FPLV, WPAW…GFVA, GLAV…LLAL, LTMT…GAVL, ALHG…LTIG, LGFT…LGSQ, and AMVR…ALAF.

This sequence belongs to the major facilitator superfamily. EmrB family.

The protein localises to the cell membrane. In terms of biological role, promotes the efflux of actinorhodin. The polypeptide is Probable actinorhodin transporter (actII-2) (Streptomyces coelicolor (strain ATCC BAA-471 / A3(2) / M145)).